We begin with the raw amino-acid sequence, 179 residues long: Large ribosomal subunit protein uL5 (179 aa).

This sequence belongs to the universal ribosomal protein uL5 family. As to quaternary structure, part of the 50S ribosomal subunit; part of the 5S rRNA/L5/L18/L25 subcomplex. Contacts the 5S rRNA and the P site tRNA. Forms a bridge to the 30S subunit in the 70S ribosome.

This is one of the proteins that bind and probably mediate the attachment of the 5S RNA into the large ribosomal subunit, where it forms part of the central protuberance. In the 70S ribosome it contacts protein S13 of the 30S subunit (bridge B1b), connecting the 2 subunits; this bridge is implicated in subunit movement. Contacts the P site tRNA; the 5S rRNA and some of its associated proteins might help stabilize positioning of ribosome-bound tRNAs. The chain is Large ribosomal subunit protein uL5 from Carboxydothermus hydrogenoformans (strain ATCC BAA-161 / DSM 6008 / Z-2901).